Reading from the N-terminus, the 138-residue chain is Putative pre-16S rRNA nuclease (138 aa).

It belongs to the YqgF nuclease family.

It is found in the cytoplasm. Could be a nuclease involved in processing of the 5'-end of pre-16S rRNA. This is Putative pre-16S rRNA nuclease from Salmonella typhimurium (strain LT2 / SGSC1412 / ATCC 700720).